Here is a 569-residue protein sequence, read N- to C-terminus: MEGEERGYWRWSKRDFFPEESFQSFGSYRAALSQTCSRFKNRLVSRSDDENERFELKKQSEHEMKRCLTWWDLVWFGFGSVIGAGIFVLTGQEAHEQAGPAIVLSYVVSGLSAMLSVFCYTEFAVEIPVAGGSFAYLRIELGDFAAFITAGNILLESIVGTAAVARAWTSYFATLLNRSPNALRIKTDLSSGFNLLDPIAVVVIAASATIASISTRKTSLLNWIASAINTLVIFFVIIAGFIHADTSNLTPFLPFGPEGVFRAAAVVYFAYGGFDSIATMAEETKNPSRDIPIGLLGSMSIITVIYCLMALSLSMMQKYTDIDPNAAYSVAFQSVGMKWGKYLVALGALKGMTTVLLVGALGQARYVTHIARTHMIPPIFALVHPKTGTPINANLLVAIPSALIAFFSGLDVLASLLSISTLFIFTMMPIALLVRRYYVRQDTPRVHLIKLITCLLFVVVSSMGTSAYWGMQRKGSWIGYTVTVPFWFLGTLGIVFFVPQQRTPKVWGVPLVPWLPCLSIATNIFLMGSLGAMAFVRFGVCTLAMLLYYFLLGLHATFDMAHQQIVPRT.

At 1-67 (MEGEERGYWR…KQSEHEMKRC (67 aa)) the chain is on the cytoplasmic side. The chain crosses the membrane as a helical span at residues 68–88 (LTWWDLVWFGFGSVIGAGIFV). Residues 89–97 (LTGQEAHEQ) lie on the Extracellular side of the membrane. Residues 98-118 (AGPAIVLSYVVSGLSAMLSVF) form a helical membrane-spanning segment. The Cytoplasmic segment spans residues 119-143 (CYTEFAVEIPVAGGSFAYLRIELGD). A helical transmembrane segment spans residues 144 to 164 (FAAFITAGNILLESIVGTAAV). The Extracellular portion of the chain corresponds to 165 to 192 (ARAWTSYFATLLNRSPNALRIKTDLSSG). The helical transmembrane segment at 193–213 (FNLLDPIAVVVIAASATIASI) threads the bilayer. At 214–222 (STRKTSLLN) the chain is on the cytoplasmic side. A helical membrane pass occupies residues 223 to 243 (WIASAINTLVIFFVIIAGFIH). Over 244-251 (ADTSNLTP) the chain is Extracellular. The helical transmembrane segment at 252–272 (FLPFGPEGVFRAAAVVYFAYG) threads the bilayer. The Cytoplasmic portion of the chain corresponds to 273–290 (GFDSIATMAEETKNPSRD). The helical transmembrane segment at 291-311 (IPIGLLGSMSIITVIYCLMAL) threads the bilayer. The Extracellular portion of the chain corresponds to 312 to 341 (SLSMMQKYTDIDPNAAYSVAFQSVGMKWGK). Residues 342-362 (YLVALGALKGMTTVLLVGALG) traverse the membrane as a helical segment. The Cytoplasmic portion of the chain corresponds to 363-389 (QARYVTHIARTHMIPPIFALVHPKTGT). The helical transmembrane segment at 390–410 (PINANLLVAIPSALIAFFSGL) threads the bilayer. A topological domain (extracellular) is located at residue D411. A helical transmembrane segment spans residues 412-432 (VLASLLSISTLFIFTMMPIAL). The Cytoplasmic portion of the chain corresponds to 433–450 (LVRRYYVRQDTPRVHLIK). The chain crosses the membrane as a helical span at residues 451–471 (LITCLLFVVVSSMGTSAYWGM). The Extracellular portion of the chain corresponds to 472–477 (QRKGSW). A helical transmembrane segment spans residues 478–498 (IGYTVTVPFWFLGTLGIVFFV). Over 499–505 (PQQRTPK) the chain is Cytoplasmic. The chain crosses the membrane as a helical span at residues 506–526 (VWGVPLVPWLPCLSIATNIFL). The Extracellular portion of the chain corresponds to 527–537 (MGSLGAMAFVR). A helical transmembrane segment spans residues 538-558 (FGVCTLAMLLYYFLLGLHATF). Topologically, residues 559-569 (DMAHQQIVPRT) are cytoplasmic.

Belongs to the amino acid-polyamine-organocation (APC) superfamily. Cationic amino acid transporter (CAT) (TC 2.A.3.3) family. In terms of tissue distribution, expressed in roots, stems, flowers, seeds, and leaves. Mostly present in leaf rims and cotyledons of developing seedlings.

Its subcellular location is the cell membrane. Functionally, high-affinity permease involved in the transport of the cationic amino acids (e.g. arginine, and, to a lower extent, citrulline and glutamate). Transport mostly basic amino acids, and, to a lower extent neutral and acidic amino acids. This is Cationic amino acid transporter 5 (CAT5) from Arabidopsis thaliana (Mouse-ear cress).